The chain runs to 206 residues: MTHRRAHIYRETSESTVDVAIDLDGAGESTISTGVGFYDHMLTTLSKHSGIDMTITTTGDVEIDGHHSIEDTAIALGQALAQALGDKCGITRFGDAVVPLDEALAQCVVDVAGRPWVACSGEPEGQAYVRIGGSGVSYQGSMTYHVMHSLAFNAGLCVHLRLLAGRDPHHICEAEFKALARALRIAIAPDPRNAGRVPSTKGALNV.

Belongs to the imidazoleglycerol-phosphate dehydratase family.

It is found in the cytoplasm. It carries out the reaction D-erythro-1-(imidazol-4-yl)glycerol 3-phosphate = 3-(imidazol-4-yl)-2-oxopropyl phosphate + H2O. It participates in amino-acid biosynthesis; L-histidine biosynthesis; L-histidine from 5-phospho-alpha-D-ribose 1-diphosphate: step 6/9. The protein is Imidazoleglycerol-phosphate dehydratase of Cutibacterium acnes (strain DSM 16379 / KPA171202) (Propionibacterium acnes).